A 578-amino-acid polypeptide reads, in one-letter code: Palmitoyltransferase ZDHHC1 (578 aa).

Residues 1-41 (MDVCSKNSNRTAPVSEGGIRRADVPLCSRTNGWSWPPHPFQ) are Cytoplasmic-facing. A helical membrane pass occupies residues 42–62 (FLAWLLYLYFAVTGFGVFVPL). Residues 63–71 (LPTHWIPAG) are Lumenal-facing. Residues 72–92 (YICTGITFVCHLFMHLMAVSI) form a helical membrane-spanning segment. Over 93-174 (DPADYNVRAK…YWLFLNSVIS (82 aa)) the chain is Cytoplasmic. The 53-residue stretch at 121-173 (ENCHCYLCEVDVGPKSKHCSACNKCVASFDHHCRWLNNCVGSRNYWLFLNSVI) folds into the DHHC domain. Catalysis depends on C153, which acts as the S-palmitoyl cysteine intermediate. The helical transmembrane segment at 175–195 (ALLGIVLVVVIASYVFIEFFL) threads the bilayer. Residues 196–230 (DPSKLRSDKHFQQVRNESVVWFVFLPVAPVTTAGP) lie on the Lumenal side of the membrane. The helical transmembrane segment at 231–251 (AIPALAGVTIALGLLSALLLG) threads the bilayer. The Cytoplasmic portion of the chain corresponds to 252–578 (HLLCFHIYLM…PSSRVGTSLA (327 aa)). The segment covering 278–288 (QEAGDSRKPPP) has biased composition (basic and acidic residues). Disordered regions lie at residues 278–298 (QEAG…PKLN), 345–376 (HMDE…KRKV), 497–517 (SAAG…TAAR), and 532–578 (SMFM…TSLA). Residues 363–376 (PHPHKHAQKKKRKV) show a composition bias toward basic residues. Over residues 552–561 (AAKRKQTGKK) the composition is skewed to basic residues.

It belongs to the DHHC palmitoyltransferase family.

It is found in the endosome membrane. Its subcellular location is the endoplasmic reticulum membrane. The protein localises to the golgi apparatus. It carries out the reaction L-cysteinyl-[protein] + hexadecanoyl-CoA = S-hexadecanoyl-L-cysteinyl-[protein] + CoA. Functionally, palmitoyltransferase that catalyzes the addition of palmitate onto various protein substrates, such as ncdn and nlrp3. This Danio rerio (Zebrafish) protein is Palmitoyltransferase ZDHHC1.